The following is a 126-amino-acid chain: Histone H2B.5 (126 aa).

The segment covering 1–27 has biased composition (basic and acidic residues); the sequence is MAPKAEKKPSEKAPKADKKITKEGGSE. A disordered region spans residues 1-34; that stretch reads MAPKAEKKPSEKAPKADKKITKEGGSERKKKTKK. Residue A2 is modified to N,N,N-trimethylalanine; alternate. A2 is subject to N,N-dimethylalanine; alternate. Position 2 is an N-methylalanine; alternate (A2). At K4 the chain carries N6-methyllysine. Residues K7, K12, K18, and K19 each carry the N6-acetyllysine modification. A Glycyl lysine isopeptide (Lys-Gly) (interchain with G-Cter in ubiquitin) cross-link involves residue K122.

It belongs to the histone H2B family. In terms of assembly, the nucleosome is a histone octamer containing two molecules each of H2A, H2B, H3 and H4 assembled in one H3-H4 heterotetramer and two H2A-H2B heterodimers. The octamer wraps approximately 147 bp of DNA. Post-translationally, can be acetylated to form H2BK6ac, H2BK33ac and H2BK34ac. Monoubiquitinated by BRE1 to form H2BK143ub1 and deubiquitinated by UBP26. Required for heterochromatic histone H3 di- and trimethylation at H3K4me. May give a specific tag for epigenetic transcriptional activation.

The protein localises to the nucleus. Its subcellular location is the chromosome. Its function is as follows. Core component of nucleosome. Nucleosomes wrap and compact DNA into chromatin, limiting DNA accessibility to the cellular machineries which require DNA as a template. Histones thereby play a central role in transcription regulation, DNA repair, DNA replication and chromosomal stability. DNA accessibility is regulated via a complex set of post-translational modifications of histones, also called histone code, and nucleosome remodeling. This chain is Histone H2B.5, found in Arabidopsis thaliana (Mouse-ear cress).